The chain runs to 181 residues: Probable calcium-binding protein CML43 (181 aa).

EF-hand domains are found at residues 24 to 59, 107 to 142, and 145 to 180; these read LNAL…LGLD, SPES…LGLP, and GEIE…VVVP. Residues Asp37, Asn39, Asp41, Glu48, Asp120, Asp122, Asp124, Glu131, Asp158, Asn160, Asp162, Arg164, and Glu169 each contribute to the Ca(2+) site.

In terms of tissue distribution, expressed specifically in roots.

Its function is as follows. Calcium-binding protein that may mediate calcium-dependent signal during plant defense response. This Arabidopsis thaliana (Mouse-ear cress) protein is Probable calcium-binding protein CML43 (CML43).